The chain runs to 153 residues: Interleukin-4 (153 aa).

The signal sequence occupies residues 1–24; the sequence is MGLTSQLLPPLFFLLACAGNFVHG. Cystine bridges form between C27-C151, C48-C89, and C70-C123. N62 carries an N-linked (GlcNAc...) asparagine glycan.

It belongs to the IL-4/IL-13 family. As to quaternary structure, interacts with IL4R. Interacts with IL13RA1.

The protein resides in the secreted. Cytokine secreted primarily by mast cells, T-cells, eosinophils, and basophils that plays a role in regulating antibody production, hematopoiesis and inflammation, and the development of effector T-cell responses. Induces the expression of class II MHC molecules on resting B-cells. Enhances both secretion and cell surface expression of IgE and IgG1. Also regulates the expression of the low affinity Fc receptor for IgE (CD23) on both lymphocytes and monocytes. Positively regulates IL31RA expression in macrophages. Stimulates autophagy in dendritic cells by interfering with mTORC1 signaling and through the induction of RUFY4. In addition, plays a critical role in higher functions of the normal brain, such as memory and learning. Upon binding to IL4, IL4R receptor dimerizes either with the common IL2R gamma chain/IL2RG to produce the type 1 signaling complex, located mainly on hematopoietic cells, or with the IL13RA1 to produce the type 2 complex, which is also expressed on nonhematopoietic cells. Engagement of both types of receptors initiates JAK3 and to a lower extend JAK1 phosphorylation leading to activation of the signal transducer and activator of transcription 6/STAT6. This is Interleukin-4 (IL4) from Homo sapiens (Human).